Here is a 133-residue protein sequence, read N- to C-terminus: Male-specific protein scotti (133 aa).

Residues 11–57 (FPSNGLGNNNNDPNQQRGERPRQPHPDLGWILDAPNEPPRNRNPLLY) are disordered. Positions 14–24 (NGLGNNNNDPN) are enriched in low complexity. N-linked (GlcNAc...) asparagine glycosylation occurs at Asn83.

It belongs to the male-specific scotti family.

Functionally, post-meiotically transcribed gene that has a role in late spermiogenesis; required for actin cone progression during spermatid individualization. This chain is Male-specific protein scotti, found in Drosophila persimilis (Fruit fly).